A 99-amino-acid chain; its full sequence is DNA-directed RNA polymerase subunit Rpo11 (99 aa).

This sequence belongs to the archaeal Rpo11/eukaryotic RPB11/RPC19 RNA polymerase subunit family. As to quaternary structure, part of the RNA polymerase complex. Forms an Rpo3-Rpo10-Rpo11-Rpo12 complex upon coexpression.

It localises to the cytoplasm. The catalysed reaction is RNA(n) + a ribonucleoside 5'-triphosphate = RNA(n+1) + diphosphate. Functionally, DNA-dependent RNA polymerase (RNAP) catalyzes the transcription of DNA into RNA using the four ribonucleoside triphosphates as substrates. The chain is DNA-directed RNA polymerase subunit Rpo11 from Methanocaldococcus jannaschii (strain ATCC 43067 / DSM 2661 / JAL-1 / JCM 10045 / NBRC 100440) (Methanococcus jannaschii).